The chain runs to 488 residues: Lysine--tRNA ligase (488 aa).

Mg(2+) is bound by residues E398 and E405.

It belongs to the class-II aminoacyl-tRNA synthetase family. As to quaternary structure, homodimer. Mg(2+) serves as cofactor.

The protein resides in the cytoplasm. It catalyses the reaction tRNA(Lys) + L-lysine + ATP = L-lysyl-tRNA(Lys) + AMP + diphosphate. This chain is Lysine--tRNA ligase, found in Carboxydothermus hydrogenoformans (strain ATCC BAA-161 / DSM 6008 / Z-2901).